A 1528-amino-acid polypeptide reads, in one-letter code: Multidrug resistance-associated protein 1 (1528 aa).

Over M1–F33 the chain is Extracellular. An N-linked (GlcNAc...) asparagine glycan is attached at N19. The helical transmembrane segment at Q34–F54 threads the bilayer. Over F55 to K74 the chain is Cytoplasmic. A helical transmembrane segment spans residues T75–E95. Topologically, residues R96–V100 are extracellular. The helical transmembrane segment at L101 to T121 threads the bilayer. The Cytoplasmic segment spans residues F122–Q133. Residues S134 to R154 traverse the membrane as a helical segment. Residues S155–D172 lie on the Extracellular side of the membrane. A helical membrane pass occupies residues S173 to D193. Topologically, residues C194–V317 are cytoplasmic. Position 277 is a phosphotyrosine (Y277). S290 is subject to Phosphoserine. Residues L318–L338 traverse the membrane as a helical segment. An ABC transmembrane type-1 1 domain is found at F326 to Q609. Residues M339–G364 lie on the Extracellular side of the membrane. A helical membrane pass occupies residues Y365–Y385. At F386–Y441 the chain is on the cytoplasmic side. The helical transmembrane segment at I442–S462 threads the bilayer. The Extracellular portion of the chain corresponds to L463 to P465. A helical transmembrane segment spans residues S466–M486. The Cytoplasmic portion of the chain corresponds to K487–A548. K504 is subject to N6-succinyllysine. The chain crosses the membrane as a helical span at residues V549–F569. Over V570–N591 the chain is Extracellular. A helical transmembrane segment spans residues I592–V612. Over S613 to M963 the chain is Cytoplasmic. Residues I644 to T868 enclose the ABC transporter 1 domain. G678 to S685 is an ATP binding site. 2 disordered regions span residues L876–N895 and R909–A929. Residues S878, S882, S912, and S927 each carry the phosphoserine modification. Residues H910 to A929 show a composition bias toward polar residues. The chain crosses the membrane as a helical span at residues K964–S984. The 283-residue stretch at T971–T1253 folds into the ABC transmembrane type-1 2 domain. Over A985 to L1022 the chain is Extracellular. Residue N1003 is glycosylated (N-linked (GlcNAc...) asparagine). Residues Q1023–R1043 form a helical membrane-spanning segment. The Cytoplasmic portion of the chain corresponds to R1044–Q1086. The chain crosses the membrane as a helical span at residues V1087–L1107. A1108 is a topological domain (extracellular). The chain crosses the membrane as a helical span at residues T1109–F1129. Residues Y1130–L1200 lie on the Cytoplasmic side of the membrane. Residues E1201–S1221 traverse the membrane as a helical segment. Over L1222–S1223 the chain is Extracellular. Residues A1224–L1244 form a helical membrane-spanning segment. The Cytoplasmic segment spans residues V1245–V1528. Residues V1290 to D1524 form the ABC transporter 2 domain. G1324–S1331 is an ATP binding site.

This sequence belongs to the ABC transporter superfamily. ABCC family. Conjugate transporter (TC 3.A.1.208) subfamily.

The protein resides in the cell membrane. The protein localises to the basolateral cell membrane. It catalyses the reaction ATP + H2O + xenobioticSide 1 = ADP + phosphate + xenobioticSide 2.. The catalysed reaction is an S-substituted glutathione(in) + ATP + H2O = an S-substituted glutathione(out) + ADP + phosphate + H(+). The enzyme catalyses leukotriene C4(in) + ATP + H2O = leukotriene C4(out) + ADP + phosphate + H(+). It carries out the reaction sphing-4-enine 1-phosphate(in) + ATP + H2O = sphing-4-enine 1-phosphate(out) + ADP + phosphate + H(+). It catalyses the reaction 17beta-estradiol 17-O-(beta-D-glucuronate)(in) + ATP + H2O = 17beta-estradiol 17-O-(beta-D-glucuronate)(out) + ADP + phosphate + H(+). The catalysed reaction is vincristine(in) + ATP + H2O = vincristine(out) + ADP + phosphate + H(+). The enzyme catalyses daunorubicin(in) + ATP + H2O = daunorubicin(out) + ADP + phosphate + H(+). It carries out the reaction 2',3'-cGAMP(in) + ATP + H2O = 2',3'-cGAMP(out) + ADP + phosphate + H(+). It catalyses the reaction S-[(2E,6E,10E)-geranylgeranyl]-L-glutathione(in) + ATP + H2O = S-[(2E,6E,10E)-geranylgeranyl]-L-glutathione(out) + ADP + phosphate + H(+). The catalysed reaction is prostaglandin A2-S-(R)-glutathione(in) + ATP + H2O = prostaglandin A2-S-(R)-glutathione(out) + ADP + phosphate + H(+). The enzyme catalyses prostaglandin A2-S-(S)-glutathione(in) + ATP + H2O = prostaglandin A2-S-(S)-glutathione(out) + ADP + phosphate + H(+). Its activity is regulated as follows. MK 571 inhibits sphingosine 1-phosphate and leukotriene C4 export. Functionally, mediates export of organic anions and drugs from the cytoplasm. Mediates ATP-dependent transport of glutathione and glutathione conjugates, leukotriene C4, estradiol-17-beta-o-glucuronide, methotrexate, antiviral drugs and other xenobiotics. Confers resistance to anticancer drugs by decreasing accumulation of drugs in cells, and by mediating ATP- and GSH-dependent drug export. Hydrolyzes ATP with low efficiency. Catalyzes the export of sphingosine 1-phosphate from mast cells independently of their degranulation. Participates in inflammatory response by allowing export of leukotriene C4 from leukotriene C4-synthesizing cells. Mediates ATP-dependent, GSH-independent cyclic GMP-AMP (cGAMP) export. Thus, by limiting intracellular cGAMP concentrations negatively regulates the cGAS-STING pathway. Exports S-geranylgeranyl-glutathione (GGG) in lymphoid cells and stromal compartments of lymphoid organs. ABCC1 (via extracellular transport) with GGT5 (via GGG catabolism) establish GGG gradients within lymphoid tissues to position P2RY8-positive lymphocytes at germinal centers in lymphoid follicles and restrict their chemotactic transmigration from blood vessels to the bone marrow parenchyma. Mediates basolateral export of GSH-conjugated R- and S-prostaglandin A2 diastereomers in polarized epithelial cells. This chain is Multidrug resistance-associated protein 1, found in Mus musculus (Mouse).